A 77-amino-acid polypeptide reads, in one-letter code: Cell division topological specificity factor (77 aa).

It belongs to the MinE family.

Prevents the cell division inhibition by proteins MinC and MinD at internal division sites while permitting inhibition at polar sites. This ensures cell division at the proper site by restricting the formation of a division septum at the midpoint of the long axis of the cell. In Helicobacter pylori (strain Shi470), this protein is Cell division topological specificity factor.